The chain runs to 253 residues: Sulfate transporter CysZ (253 aa).

The next 4 membrane-spanning stretches (helical) occupy residues 31-51, 72-92, 151-171, and 222-242; these read FVIL…WWLF, LSYI…GYFF, IVLL…PVLW, and IPVL…AMWV.

It belongs to the CysZ family.

Its subcellular location is the cell inner membrane. Functionally, high affinity, high specificity proton-dependent sulfate transporter, which mediates sulfate uptake. Provides the sulfur source for the cysteine synthesis pathway. This chain is Sulfate transporter CysZ, found in Escherichia fergusonii (strain ATCC 35469 / DSM 13698 / CCUG 18766 / IAM 14443 / JCM 21226 / LMG 7866 / NBRC 102419 / NCTC 12128 / CDC 0568-73).